The primary structure comprises 422 residues: F-box protein At3g12350 (422 aa).

The F-box domain maps to 5 to 52 (ALPFCEIPEDLQLRILSLLTPAEISSFACTSKRFASLCQEDGKIWHVM). Composition is skewed to basic and acidic residues over residues 197 to 207 (NNRREDQRSSG) and 242 to 252 (KEKERQASRTK). Disordered regions lie at residues 197–216 (NNRR…LISS) and 226–252 (LANK…SRTK).

The polypeptide is F-box protein At3g12350 (Arabidopsis thaliana (Mouse-ear cress)).